The chain runs to 398 residues: MSIKIIIPSLGESVTEATIAKWYKKLGDAVKTDELLLEIETDKVTLEVNAPCNGTIGKISKTDGANVTVGEEVGEINEIADTDTAWINNKKQEVSQHTSEQLVDKPAMASNILAPSVQKLVTENKLDPNNIKGTGRGGRITKYDVLETINTTPITIETHAINKTNEERTQRVRMSRLRKTIAQRLKDSQNTAAILTTFNEIDMSKVIALRNQYKEEFEKKHTVKLGFMSFFVKATIEALKLIPSINAEIDGDDLLYKNYYDIGVAVGTEQGLVVPVIRDADKMSFADIEQAIGNLAKKAREGKLSISDLSGGTFSISNGGVYGSLLSTPIINPPQSGILGLHKTEERAVVIDGKIEIRPMMYIALSYDHRIIDGKEGVSFLVKIKNLIENPEKLLLNL.

Positions 2–77 (SIKIIIPSLG…TVGEEVGEIN (76 aa)) constitute a Lipoyl-binding domain. Lys-43 bears the N6-lipoyllysine mark. The Peripheral subunit-binding (PSBD) domain maps to 112 to 149 (ILAPSVQKLVTENKLDPNNIKGTGRGGRITKYDVLETI). Active-site residues include His-369 and Asp-373.

The protein belongs to the 2-oxoacid dehydrogenase family. As to quaternary structure, forms a 24-polypeptide structural core with octahedral symmetry. Part of the 2-oxoglutarate dehydrogenase (OGDH) complex composed of E1 (2-oxoglutarate dehydrogenase), E2 (dihydrolipoamide succinyltransferase) and E3 (dihydrolipoamide dehydrogenase); the complex contains multiple copies of the three enzymatic components (E1, E2 and E3). (R)-lipoate serves as cofactor.

The enzyme catalyses N(6)-[(R)-dihydrolipoyl]-L-lysyl-[protein] + succinyl-CoA = N(6)-[(R)-S(8)-succinyldihydrolipoyl]-L-lysyl-[protein] + CoA. It participates in amino-acid degradation; L-lysine degradation via saccharopine pathway; glutaryl-CoA from L-lysine: step 6/6. Its function is as follows. E2 component of the 2-oxoglutarate dehydrogenase (OGDH) complex which catalyzes the second step in the conversion of 2-oxoglutarate to succinyl-CoA and CO(2). This Rickettsia typhi (strain ATCC VR-144 / Wilmington) protein is Dihydrolipoyllysine-residue succinyltransferase component of 2-oxoglutarate dehydrogenase complex (sucB).